The chain runs to 734 residues: Photosystem I P700 chlorophyll a apoprotein A2 (734 aa).

Helical transmembrane passes span 46–69 (IFAS…FHVA), 135–158 (LYTG…LHLQ), 175–199 (LNHH…HVAI), 273–291 (MAHH…GHMY), 330–353 (IHFQ…QHMY), 369–395 (AALY…IFFI), 417–439 (AIIS…LYVH), and 517–535 (FLVH…LILV). 2 residues coordinate [4Fe-4S] cluster: Cys-559 and Cys-568. 2 consecutive transmembrane segments (helical) span residues 575–596 (AFYL…YWHW) and 643–665 (LSVW…MFLI). Residues His-654, Met-662, and Tyr-670 each coordinate chlorophyll a. Trp-671 is a phylloquinone binding site. The chain crosses the membrane as a helical span at residues 707-727 (LVGLAHFSVGYIFTYAAFLIA).

Belongs to the PsaA/PsaB family. As to quaternary structure, the PsaA/B heterodimer binds the P700 chlorophyll special pair and subsequent electron acceptors. PSI consists of a core antenna complex that captures photons, and an electron transfer chain that converts photonic excitation into a charge separation. The eukaryotic PSI reaction center is composed of at least 11 subunits. P700 is a chlorophyll a/chlorophyll a' dimer, A0 is one or more chlorophyll a, A1 is one or both phylloquinones and FX is a shared 4Fe-4S iron-sulfur center. is required as a cofactor.

It is found in the plastid. The protein localises to the chloroplast thylakoid membrane. It carries out the reaction reduced [plastocyanin] + hnu + oxidized [2Fe-2S]-[ferredoxin] = oxidized [plastocyanin] + reduced [2Fe-2S]-[ferredoxin]. In terms of biological role, psaA and PsaB bind P700, the primary electron donor of photosystem I (PSI), as well as the electron acceptors A0, A1 and FX. PSI is a plastocyanin-ferredoxin oxidoreductase, converting photonic excitation into a charge separation, which transfers an electron from the donor P700 chlorophyll pair to the spectroscopically characterized acceptors A0, A1, FX, FA and FB in turn. Oxidized P700 is reduced on the lumenal side of the thylakoid membrane by plastocyanin. This Lepidium virginicum (Virginia pepperweed) protein is Photosystem I P700 chlorophyll a apoprotein A2.